The chain runs to 188 residues: SAYSvFN domain-containing protein 1 (188 aa).

A compositionally biased stretch (basic and acidic residues) spans 1 to 10; that stretch reads MEQRLAEFRE. 2 disordered regions span residues 1–43 and 60–80; these read MEQR…ATPK and AIAQAQPNQPQEAGQQLPEST. Over 1–100 the chain is Cytoplasmic; that stretch reads MEQRLAEFRE…SFLTNITFLK (100 aa). Composition is skewed to low complexity over residues 22 to 43 and 60 to 75; these read STSSQSVQTSGAKAEPAAATPK and AIAQAQPNQPQEAGQQ. The tract at residues 86 to 100 is middle helical (MH); it reads SSCRQSFLTNITFLK. Positions 101-121 form an intramembrane region, helical; that stretch reads VLLWLVLLGLFVELEFGLAYF. The Cytoplasmic portion of the chain corresponds to 122-188; sequence VLSMFYWMYV…RTSPSCSSYP (67 aa).

This sequence belongs to the SAYSD1 family. In terms of assembly, associates (via N-terminus) with ribosomes. As to expression, enriched in testis; predominantly expressed in round and elongating spermatids.

The protein localises to the endoplasmic reticulum membrane. The protein resides in the cytoplasmic vesicle membrane. Ufmylation 'reader' component of a translocation-associated quality control pathway, a mechanism that takes place when a ribosome has stalled during translation, and which is required to degrade clogged substrates. Specifically recognizes and binds ufmylated ribosomes when a ribosome has stalled, promoting the transport of stalled nascent chain via the TRAPP complex to lysosomes for degradation. This chain is SAYSvFN domain-containing protein 1, found in Mus musculus (Mouse).